The chain runs to 417 residues: MAWFALYLLSLLWATAGTSTQTQSSCSVPSAQEPLVNGIQVLMENSVTSSAYPNPSILIAMNLAGAYNLKAQKLLTYQLMSSDNNDLTIGQLGLTIMALTSSCRDPGDKVSILQRQMENWAPSSPNAEASAFYGPSLAILALCQKNSEATLPIAVRFAKTLLANSSPFNVDTGAMATLALTCMYNKIPVGSEEGYRSLFGQVLKDIVEKISMKIKDNGIIGDIYSTGLAMQALSVTPEPSKKEWNCKKTTDMILNEIKQGKFHNPMSIAQILPSLKGKTYLDVPQVTCSPDHEVQPTLPSNPGPGPTSASNITVIYTINNQLRGVELLFNETINVSVKSGSVLLVVLEEAQRKNPMFKFETTMTSWGLVVSSINNIAENVNHKTYWQFLSGVTPLNEGVADYIPFNHEHITANFTQY.

An N-terminal signal peptide occupies residues methionine 1–threonine 18. 3 disulfide bridges follow: cysteine 26/cysteine 246, cysteine 103/cysteine 288, and cysteine 143/cysteine 182. Residue aspartate 171 coordinates cob(II)alamin. At serine 191 the chain carries Phosphoserine. Residues aspartate 222 and glutamine 270 each contribute to the cob(II)alamin site. N-linked (GlcNAc...) asparagine glycosylation is found at asparagine 311, asparagine 330, and asparagine 334. Cob(II)alamin is bound by residues serine 365–valine 370 and tryptophan 386–leucine 395. The N-linked (GlcNAc...) asparagine glycan is linked to asparagine 413.

This sequence belongs to the eukaryotic cobalamin transport proteins family. As to quaternary structure, interacts with CUBN (via CUB domains). Gastric mucosa.

It is found in the secreted. In terms of biological role, promotes absorption of the essential vitamin cobalamin (Cbl) in the ileum. After interaction with CUBN, the CBLIF-cobalamin complex is internalized via receptor-mediated endocytosis. This is Cobalamin binding intrinsic factor from Homo sapiens (Human).